We begin with the raw amino-acid sequence, 211 residues long: ATP phosphoribosyltransferase (211 aa).

Belongs to the ATP phosphoribosyltransferase family. Short subfamily. In terms of assembly, heteromultimer composed of HisG and HisZ subunits.

Its subcellular location is the cytoplasm. It catalyses the reaction 1-(5-phospho-beta-D-ribosyl)-ATP + diphosphate = 5-phospho-alpha-D-ribose 1-diphosphate + ATP. It functions in the pathway amino-acid biosynthesis; L-histidine biosynthesis; L-histidine from 5-phospho-alpha-D-ribose 1-diphosphate: step 1/9. In terms of biological role, catalyzes the condensation of ATP and 5-phosphoribose 1-diphosphate to form N'-(5'-phosphoribosyl)-ATP (PR-ATP). Has a crucial role in the pathway because the rate of histidine biosynthesis seems to be controlled primarily by regulation of HisG enzymatic activity. In Pseudomonas putida (strain ATCC 700007 / DSM 6899 / JCM 31910 / BCRC 17059 / LMG 24140 / F1), this protein is ATP phosphoribosyltransferase.